Here is a 208-residue protein sequence, read N- to C-terminus: Translation initiation factor 6 (208 aa).

Belongs to the eIF-6 family.

Functionally, binds to the 50S ribosomal subunit and prevents its association with the 30S ribosomal subunit to form the 70S initiation complex. This Nanoarchaeum equitans (strain Kin4-M) protein is Translation initiation factor 6 (eif6).